The following is a 465-amino-acid chain: Citrate synthase-like protein (465 aa).

The tract at residues 13–40 (HISDMVDSTKMNGNQSQDTAGRADTPVS) is disordered. A compositionally biased stretch (polar residues) spans 21-31 (TKMNGNQSQDT). Active-site residues include H357 and D413.

The protein belongs to the citrate synthase family.

The protein operates within secondary metabolite biosynthesis. Its function is as follows. Citrate synthase-like protein; part of the gene cluster that mediates the biosynthesis of squalestatin S1 (SQS1, also known as zaragozic acid A), a heavily oxidized fungal polyketide that offers potent cholesterol lowering activity by targeting squalene synthase (SS). SQS1 is composed of a 2,8-dioxobicyclic[3.2.1]octane-3,4,5-tricarboxyclic acid core that is connected to two lipophilic polyketide arms. These initial steps feature the priming of an unusual benzoic acid starter unit onto the highly reducing polyketide synthase pks2, followed by oxaloacetate extension and product release to generate a tricarboxylic acid containing product. The phenylalanine ammonia lyase (PAL) M7 and the acyl-CoA ligase M9 are involved in transforming phenylalanine into benzoyl-CoA. The citrate synthase-like protein R3 is involved in connecting the C-alpha-carbons of the hexaketide chain and oxaloacetate to afford the tricarboxylic acid unit. The potential hydrolytic enzymes, M8 and M10, are in close proximity to pks2 and may participate in product release. On the other side, the tetraketide arm is synthesized by a the squalestatin tetraketide synthase pks1 and enzymatically esterified to the core in the last biosynthetic step, by the acetyltransferase M4. The biosynthesis of the tetraketide must involve 3 rounds of chain extension. After the first and second rounds methyl-transfer occurs, and in all rounds of extension the ketoreductase and dehydratase are active. The enoyl reductase and C-MeT of pks1 are not active in the final round of extension. The acetyltransferase M4 appears to have a broad substrate selectivity for its acyl CoA substrate, allowing the in vitro synthesis of novel squalestatins. The biosynthesis of SQS1 requires several oxidative steps likely performed by oxidoreductases M1, R1 and R2. Finally, in support of the identification of the cluster as being responsible for SQS1 production, the cluster contains a gene encoding a putative squalene synthase (SS) R6, suggesting a likely mechanism for self-resistance. The protein is Citrate synthase-like protein of Phoma sp. (strain ATCC 20986 / MF5453).